Reading from the N-terminus, the 469-residue chain is Putative dipeptidase MW1694 (469 aa).

His84 contributes to the Zn(2+) binding site. The active site involves Asp86. Asp115 is a Zn(2+) binding site. Glu149 functions as the Proton acceptor in the catalytic mechanism. Positions 150, 173, and 440 each coordinate Zn(2+).

The protein belongs to the peptidase M20A family. Zn(2+) serves as cofactor.

The protein is Putative dipeptidase MW1694 of Staphylococcus aureus (strain MW2).